A 244-amino-acid chain; its full sequence is Tyrosine recombinase XerD-like (244 aa).

One can recognise a Core-binding (CB) domain in the interval 1 to 73 (MRDRISAFLE…ACNQFLYFLY (73 aa)). The Tyr recombinase domain occupies 90–244 (AEKKTEKPEI…KTVLTLEKYR (155 aa)). Catalysis depends on residues lysine 150 and arginine 211. The active-site O-(3'-phospho-DNA)-tyrosine intermediate is the tyrosine 243.

The protein belongs to the 'phage' integrase family. XerD-like subfamily.

It localises to the cytoplasm. Its function is as follows. Putative tyrosine recombinase. Not involved in the cutting and rejoining of the recombining DNA molecules on dif(SL) site. This is Tyrosine recombinase XerD-like from Streptococcus pneumoniae (strain Hungary19A-6).